A 1119-amino-acid polypeptide reads, in one-letter code: Multiple epidermal growth factor-like domains protein 10 (1119 aa).

The first 22 residues, 1 to 22, serve as a signal peptide directing secretion; it reads MMSSCGPLLLAVSCCLVALTSS. Residues 23-851 are Extracellular-facing; sequence LNLDDPNVCS…ALPMDSYQIG (829 aa). In terms of domain architecture, EMI spans 27–104; sequence DPNVCSHWES…FYESGDICVP (78 aa). Cystine bridges form between cysteine 31–cysteine 92, cysteine 57–cysteine 66, cysteine 91–cysteine 102, cysteine 102–cysteine 115, cysteine 106–cysteine 121, cysteine 123–cysteine 132, cysteine 145–cysteine 157, cysteine 151–cysteine 164, cysteine 166–cysteine 175, cysteine 188–cysteine 200, cysteine 194–cysteine 207, cysteine 209–cysteine 218, cysteine 231–cysteine 243, cysteine 237–cysteine 250, and cysteine 252–cysteine 260. EGF-like domains lie at 98–133, 141–176, 184–219, and 227–261; these read SGDICVPHCAEKCVHGRCVAPNTCQCEPGWGGADCS, WGPHCSSRCQCKNEALCNPITGACICAPGYHGWRCE, YGNNCQQKCLCQNNATCHHITGECVCSPGYTGAFCE, and HGQQCEERCPCQNGGVCHHVTGECSCPAGWGMVCG. N-linked (GlcNAc...) asparagine glycosylation occurs at asparagine 197. Asparagine 272 is a glycosylation site (N-linked (GlcNAc...) asparagine). EGF-like domains are found at residues 274–304 and 312–347; these read SQECQCHNGGICSPSTGQCVCSSGYTGERCQ and YGIGCSQACRCVNGAQCYHVSGACLCEQGYTGESCE. Cystine bridges form between cysteine 277–cysteine 285, cysteine 279–cysteine 292, cysteine 294–cysteine 303, cysteine 316–cysteine 328, cysteine 322–cysteine 335, and cysteine 337–cysteine 346. N-linked (GlcNAc...) asparagine glycosylation is found at asparagine 369 and asparagine 393. EGF-like domains are found at residues 401–436, 444–479, 487–522, 573–608, 616–653, 666–696, 709–739, 747–782, and 795–825; these read YGEACQEVCRCQNGADCHSVSGECICAPGYKGSDCA, YGINCTSLCSCKNGAICSPIDGSCSCQAGWHGVDCS, WGLGCNLSCVCGNGGACNALDGKCTCTPGWRGDRCD, WGPNCSLSCNCKNSASCSPDEGACECAPGFRGTTCQ, FGHRCSQACPHCVHSNGPCHHVTGQCECLPGFKGALCN, GGSCTCTNNGTCSPMDGSCQCYPGWIGSDCS, IHTCNCHNGAFCSAYDGECKCTAGWTGLYCT, YGKDCVQACQCENGADCNHISGQCTCRTGFMGRHCE, and RQVCDCLNNSTCDHMTGTCYCNPGWKGTRCD. 3 cysteine pairs are disulfide-bonded: cysteine 405/cysteine 417, cysteine 411/cysteine 424, and cysteine 426/cysteine 435. An N-linked (GlcNAc...) asparagine glycan is attached at asparagine 447. 6 disulfide bridges follow: cysteine 448–cysteine 460, cysteine 454–cysteine 467, cysteine 469–cysteine 478, cysteine 491–cysteine 503, cysteine 497–cysteine 510, and cysteine 512–cysteine 521. The N-linked (GlcNAc...) asparagine glycan is linked to asparagine 492. Residue asparagine 576 is glycosylated (N-linked (GlcNAc...) asparagine). 18 disulfides stabilise this stretch: cysteine 577/cysteine 589, cysteine 583/cysteine 596, cysteine 598/cysteine 607, cysteine 620/cysteine 634, cysteine 624/cysteine 641, cysteine 643/cysteine 652, cysteine 669/cysteine 677, cysteine 671/cysteine 684, cysteine 686/cysteine 695, cysteine 712/cysteine 720, cysteine 714/cysteine 727, cysteine 729/cysteine 738, cysteine 751/cysteine 763, cysteine 757/cysteine 770, cysteine 772/cysteine 781, cysteine 798/cysteine 806, cysteine 800/cysteine 813, and cysteine 815/cysteine 824. N-linked (GlcNAc...) asparagine glycosylation is present at asparagine 674. Asparagine 803 is a glycosylation site (N-linked (GlcNAc...) asparagine). Residues 852-872 form a helical membrane-spanning segment; that stretch reads AITGIIILVLLVLILLLLFII. At 873 to 1119 the chain is on the cytoplasmic side; the sequence is YRKKQKGKES…SSPSPTEDSK (247 aa).

This sequence belongs to the MEGF family.

Its subcellular location is the cell membrane. Membrane receptor involved in phagocytosis by macrophages and astrocytes of apoptotic cells. Essential factor in the regulation of muscle development including myogenesis. Likely plays a key role in muscle cell proliferation, adhesion and motility. May control the balance between skeletal muscle satellite cells proliferation and differentiation through regulation of the notch signaling pathway. This is Multiple epidermal growth factor-like domains protein 10 from Danio rerio (Zebrafish).